The primary structure comprises 108 residues: Urease subunit gamma (108 aa).

The protein belongs to the urease gamma subunit family. Heterotrimer of UreA (gamma), UreB (beta) and UreC (alpha) subunits. Three heterotrimers associate to form the active enzyme.

It is found in the cytoplasm. The enzyme catalyses urea + 2 H2O + H(+) = hydrogencarbonate + 2 NH4(+). The protein operates within nitrogen metabolism; urea degradation; CO(2) and NH(3) from urea (urease route): step 1/1. This is Urease subunit gamma from Haloquadratum walsbyi (strain DSM 16790 / HBSQ001).